A 697-amino-acid polypeptide reads, in one-letter code: Phenylalanine--tRNA ligase beta subunit, chloroplastic (697 aa).

The region spanning 283–368 (NISRILFIDK…RIYGFDNFIS (86 aa)) is the B5 domain. 4 residues coordinate Mg(2+): Asp346, Asp352, Glu355, and Glu356. One can recognise an FDX-ACB domain in the interval 609–697 (SSYPSLTRDI…IDDLLNEYKL (89 aa)).

The protein belongs to the phenylalanyl-tRNA synthetase beta subunit family. Type 1 subfamily. Tetramer of two alpha and two beta subunits. Mg(2+) serves as cofactor.

Its subcellular location is the plastid. The protein resides in the chloroplast. The enzyme catalyses tRNA(Phe) + L-phenylalanine + ATP = L-phenylalanyl-tRNA(Phe) + AMP + diphosphate + H(+). The polypeptide is Phenylalanine--tRNA ligase beta subunit, chloroplastic (Gracilaria tenuistipitata var. liui (Red alga)).